A 951-amino-acid chain; its full sequence is MADSDDEYDRKRRDKFRGERESYRTERRDERRPIGGAGGGRDEWSERNPFRGGGAGGGGAPRHRPDYSDYRGPGPRARYGSPVRDMPPPKRMRSDWGDGDGRPGPRYGGYDPYLMQAWTDHYQSMHSAYHHASHPPPVRELPIIGGDTLTQPAMLNLKQFLDTQDENISDSEVMRKYTEYKTDFKRQQLNEFFVAHKDEEWFKNKYHPEDSVNRSEEQRGFLRRRTDVFVELLENGTIGSVKVDSSHGDALIRVLDTCVIKLEGGTDEDLKVLDEKPKEALVFDRKPESVDPTTVVENTPKSPKKEKEEDELPLIVSPQRIALKPVNSDDENWDDAEVEDAPPKKPEEEEPKESEPIPEIKQKQKKEKKKKIKKRKRNSSSDEESSSSESESSSSSSEEEEEDDEKLKAKYDVEDGLRAEQKAEAEKDQAEAAKAKLGSVSPKEEISPEKSAADPEVEGEAKEDGKQAEKSPKCDDEKKQENGDAAKVESAAEPATGDAQGEVKPVTIDLDKVNPPRAMHRTSSIFLRNLAPSITKAEIEALCSRFSGYLRTAIADPLVERRWYRRGWITFTRDVNIKEICWSLNNQRLRDCEMGAIVNRDLSRRVRPANGITAHKQVVRSDIKLCARIVMNLDEKFKLWSEGPLSKPSPASDSEATAANGSGSSYGFNSKNPVLQNITDYLIEEASAEEEELLGLSGDRKDGEGEPIERDEQLLSVLDRLVLYLRIVHSVDYYNHCEYPYEDEMPNRCGIIHARGPAPSRVTSNELNEYIKSYEGKLLQFLTKTALLSEDQIKDLGAKNADTEVEKFVQANTQELAKDKWLCPLSGKKFKGPEFIRKHIFNKHEEKVDEVRKEVQYFNNYLRDPKRPQLPEHPGSVKRPETESVRGPGGYRPPMYTPMSGMPYSFGGHMMGGGRGGRHFPPARRELPLEHHRRLVGYHDLDAPSNSDIFD.

Disordered regions lie at residues 1–108 (MADS…PRYG), 283–504 (FDRK…GEVK), 644–664 (PLSK…GSGS), and 864–893 (DPKR…GYRP). 2 stretches are compositionally biased toward basic and acidic residues: residues 8–33 (YDRK…ERRP) and 40–49 (GRDEWSERNP). Residues 51–60 (RGGGAGGGGA) show a composition bias toward gly residues. Phosphotyrosine is present on Tyr79. Ser81 carries the post-translational modification Phosphoserine. Basic and acidic residues predominate over residues 92–103 (MRSDWGDGDGRP). The residue at position 299 (Thr299) is a Phosphothreonine. Residues Ser302, Ser328, and Ser354 each carry the phosphoserine modification. The segment covering 328-340 (SDDENWDDAEVED) has biased composition (acidic residues). Basic and acidic residues predominate over residues 341-362 (APPKKPEEEEPKESEPIPEIKQ). The segment covering 363-378 (KQKKEKKKKIKKRKRN) has biased composition (basic residues). Positions 387–396 (SSESESSSSS) are enriched in low complexity. Residues 405-434 (EKLKAKYDVEDGLRAEQKAEAEKDQAEAAK) show a composition bias toward basic and acidic residues. A Phosphoserine modification is found at Ser441. Basic and acidic residues predominate over residues 442 to 487 (PKEEISPEKSAADPEVEGEAKEDGKQAEKSPKCDDEKKQENGDAAK). Over residues 649–664 (SPASDSEATAANGSGS) the composition is skewed to polar residues.

This sequence belongs to the ARS2 family. As to quaternary structure, interacts with cbp20, Dcr-2 and pasha.

The protein localises to the nucleus. Its function is as follows. Acts as a mediator between the cap-binding complex (CBC) and RNA-mediated gene silencing (RNAi). Involved in innate immunity via the short interfering RNAs (siRNAs) processing machinery by restricting the viral RNA production. Also involved microRNA (miRNA)-mediated silencing by contributing to the stability and delivery of primary miRNA transcripts to the primary miRNA processing complex containing drosha and pasha. The chain is Serrate RNA effector molecule homolog (Ars2) from Drosophila pseudoobscura pseudoobscura (Fruit fly).